The chain runs to 352 residues: Protein-glutamate methylesterase/protein-glutamine glutaminase 2 (352 aa).

Positions 6–124 constitute a Response regulatory domain; that stretch reads KVLIVEDSLV…NAGYDTMAAK (119 aa). Asp-57 is modified (4-aspartylphosphate). Residues 162–343 form the CheB-type methylesterase domain; the sequence is PGTYSMVGIV…LPLPAIAARL (182 aa). Catalysis depends on residues Ser-173, His-200, and Asp-292.

The protein belongs to the CheB family. Phosphorylated by CheA. Phosphorylation of the N-terminal regulatory domain activates the methylesterase activity.

It localises to the cytoplasm. The enzyme catalyses [protein]-L-glutamate 5-O-methyl ester + H2O = L-glutamyl-[protein] + methanol + H(+). It catalyses the reaction L-glutaminyl-[protein] + H2O = L-glutamyl-[protein] + NH4(+). Functionally, involved in chemotaxis. Part of a chemotaxis signal transduction system that modulates chemotaxis in response to various stimuli. Catalyzes the demethylation of specific methylglutamate residues introduced into the chemoreceptors (methyl-accepting chemotaxis proteins or MCP) by CheR. Also mediates the irreversible deamidation of specific glutamine residues to glutamic acid. The sequence is that of Protein-glutamate methylesterase/protein-glutamine glutaminase 2 from Paramagnetospirillum magneticum (strain ATCC 700264 / AMB-1) (Magnetospirillum magneticum).